Consider the following 148-residue polypeptide: Cysteine proteinase inhibitor 5 (148 aa).

The first 25 residues, 1–25, serve as a signal peptide directing secretion; the sequence is MASKLYYAVAPLVLVLLLLAPLSSA. The short motif at 99-103 is the Secondary area of contact element; sequence QVVSG.

This sequence belongs to the cystatin family. Phytocystatin subfamily.

It is found in the secreted. Specific inhibitor of cysteine proteinases. Probably involved in the regulation of endogenous processes and in defense against pests and pathogens. This Oryza sativa subsp. japonica (Rice) protein is Cysteine proteinase inhibitor 5.